Reading from the N-terminus, the 878-residue chain is Alanine--tRNA ligase (878 aa).

Zn(2+)-binding residues include His566, His570, Cys668, and His672. The interval 846 to 866 (GGGRPDMAQAGGKQPEKLEEA) is disordered.

It belongs to the class-II aminoacyl-tRNA synthetase family. Zn(2+) is required as a cofactor.

The protein resides in the cytoplasm. The catalysed reaction is tRNA(Ala) + L-alanine + ATP = L-alanyl-tRNA(Ala) + AMP + diphosphate. In terms of biological role, catalyzes the attachment of alanine to tRNA(Ala) in a two-step reaction: alanine is first activated by ATP to form Ala-AMP and then transferred to the acceptor end of tRNA(Ala). Also edits incorrectly charged Ser-tRNA(Ala) and Gly-tRNA(Ala) via its editing domain. In Bacillus pumilus (strain SAFR-032), this protein is Alanine--tRNA ligase.